Reading from the N-terminus, the 451-residue chain is UPF0210 protein NGO_1297 (451 aa).

This sequence belongs to the UPF0210 family. As to quaternary structure, homodimer.

This chain is UPF0210 protein NGO_1297, found in Neisseria gonorrhoeae (strain ATCC 700825 / FA 1090).